We begin with the raw amino-acid sequence, 658 residues long: DNA mismatch repair protein MutL (658 aa).

Positions 114-130 (RQEDSSHATQVKAEDGK) are enriched in basic and acidic residues. Disordered stretches follow at residues 114-138 (RQED…TAAA) and 353-405 (PMPS…HSLS). A compositionally biased stretch (polar residues) spans 361–372 (ENLFDSASNHPT).

It belongs to the DNA mismatch repair MutL/HexB family.

In terms of biological role, this protein is involved in the repair of mismatches in DNA. It is required for dam-dependent methyl-directed DNA mismatch repair. May act as a 'molecular matchmaker', a protein that promotes the formation of a stable complex between two or more DNA-binding proteins in an ATP-dependent manner without itself being part of a final effector complex. The protein is DNA mismatch repair protein MutL of Neisseria gonorrhoeae (strain NCCP11945).